Reading from the N-terminus, the 70-residue chain is Small ribosomal subunit protein bS21 (70 aa).

The protein belongs to the bacterial ribosomal protein bS21 family.

This Campylobacter hominis (strain ATCC BAA-381 / DSM 21671 / CCUG 45161 / LMG 19568 / NCTC 13146 / CH001A) protein is Small ribosomal subunit protein bS21.